Consider the following 248-residue polypeptide: tRNA pseudouridine synthase A 2 (248 aa).

The active-site Nucleophile is the Asp55. Residue Tyr113 coordinates substrate.

This sequence belongs to the tRNA pseudouridine synthase TruA family. As to quaternary structure, homodimer.

The catalysed reaction is uridine(38/39/40) in tRNA = pseudouridine(38/39/40) in tRNA. Formation of pseudouridine at positions 38, 39 and 40 in the anticodon stem and loop of transfer RNAs. This chain is tRNA pseudouridine synthase A 2, found in Clostridium tetani (strain Massachusetts / E88).